The primary structure comprises 1447 residues: DNA-directed RNA polymerase subunit beta' (1447 aa).

The Zn(2+) site is built by C70, C72, C85, and C88. D460, D462, and D464 together coordinate Mg(2+). Zn(2+) is bound by residues C890, C964, C971, and C974.

The protein belongs to the RNA polymerase beta' chain family. As to quaternary structure, the RNAP catalytic core consists of 2 alpha, 1 beta, 1 beta' and 1 omega subunit. When a sigma factor is associated with the core the holoenzyme is formed, which can initiate transcription. Mg(2+) serves as cofactor. It depends on Zn(2+) as a cofactor.

It carries out the reaction RNA(n) + a ribonucleoside 5'-triphosphate = RNA(n+1) + diphosphate. Its function is as follows. DNA-dependent RNA polymerase catalyzes the transcription of DNA into RNA using the four ribonucleoside triphosphates as substrates. This is DNA-directed RNA polymerase subunit beta' from Desulfosudis oleivorans (strain DSM 6200 / JCM 39069 / Hxd3) (Desulfococcus oleovorans).